We begin with the raw amino-acid sequence, 435 residues long: Ribulose bisphosphate carboxylase large chain (435 aa).

Lys5 bears the N6,N6,N6-trimethyllysine mark. 2 residues coordinate substrate: Asn114 and Thr164. Residue Lys166 is the Proton acceptor of the active site. A substrate-binding site is contributed by Lys168. Positions 192, 194, and 195 each coordinate Mg(2+). Lys192 carries the N6-carboxylysine modification. His285 functions as the Proton acceptor in the catalytic mechanism. 3 residues coordinate substrate: Arg286, His318, and Ser370.

The protein belongs to the RuBisCO large chain family. Type I subfamily. In terms of assembly, heterohexadecamer of 8 large chains and 8 small chains; disulfide-linked. The disulfide link is formed within the large subunit homodimers. The cofactor is Mg(2+). Post-translationally, the disulfide bond which can form in the large chain dimeric partners within the hexadecamer appears to be associated with oxidative stress and protein turnover.

The protein resides in the plastid. The protein localises to the chloroplast. The catalysed reaction is 2 (2R)-3-phosphoglycerate + 2 H(+) = D-ribulose 1,5-bisphosphate + CO2 + H2O. It catalyses the reaction D-ribulose 1,5-bisphosphate + O2 = 2-phosphoglycolate + (2R)-3-phosphoglycerate + 2 H(+). RuBisCO catalyzes two reactions: the carboxylation of D-ribulose 1,5-bisphosphate, the primary event in carbon dioxide fixation, as well as the oxidative fragmentation of the pentose substrate in the photorespiration process. Both reactions occur simultaneously and in competition at the same active site. The sequence is that of Ribulose bisphosphate carboxylase large chain from Drosera burmannii (Burmese sundew).